Consider the following 418-residue polypeptide: UDP-N-acetylglucosamine 1-carboxyvinyltransferase (418 aa).

Residue 23–24 (KN) coordinates phosphoenolpyruvate. Residue arginine 92 coordinates UDP-N-acetyl-alpha-D-glucosamine. The Proton donor role is filled by cysteine 116. Cysteine 116 is modified (2-(S-cysteinyl)pyruvic acid O-phosphothioketal). Residues 121 to 125 (RPVDL), 161 to 164 (KVSV), aspartate 306, and isoleucine 328 each bind UDP-N-acetyl-alpha-D-glucosamine.

Belongs to the EPSP synthase family. MurA subfamily.

The protein resides in the cytoplasm. The catalysed reaction is phosphoenolpyruvate + UDP-N-acetyl-alpha-D-glucosamine = UDP-N-acetyl-3-O-(1-carboxyvinyl)-alpha-D-glucosamine + phosphate. Its pathway is cell wall biogenesis; peptidoglycan biosynthesis. Cell wall formation. Adds enolpyruvyl to UDP-N-acetylglucosamine. The protein is UDP-N-acetylglucosamine 1-carboxyvinyltransferase of Vibrio parahaemolyticus serotype O3:K6 (strain RIMD 2210633).